Reading from the N-terminus, the 147-residue chain is Proteinase inhibitor type-2 T (147 aa).

The signal sequence occupies residues 1–25 (MAVHKEVSFVAYLLIVLGMFLYVDA). Tandem repeats lie at residues 25 to 82 (ALGC…PKNP) and 83 to 142 (KACP…EPKP). 8 disulfide bridges follow: Cys-28–Cys-116, Cys-32–Cys-112, Cys-40–Cys-122, Cys-52–Cys-89, Cys-55–Cys-73, Cys-56–Cys-85, Cys-62–Cys-98, and Cys-115–Cys-133.

It belongs to the protease inhibitor I20 (potato type II proteinase inhibitor) family.

Functionally, inhibitor of trypsin and chymotrypsin. The polypeptide is Proteinase inhibitor type-2 T (PIN2T) (Solanum tuberosum (Potato)).